The sequence spans 1370 residues: DNA-directed RNA polymerase subunit beta (1370 aa).

The protein belongs to the RNA polymerase beta chain family. The RNAP catalytic core consists of 2 alpha, 1 beta, 1 beta' and 1 omega subunit. When a sigma factor is associated with the core the holoenzyme is formed, which can initiate transcription.

It catalyses the reaction RNA(n) + a ribonucleoside 5'-triphosphate = RNA(n+1) + diphosphate. Functionally, DNA-dependent RNA polymerase catalyzes the transcription of DNA into RNA using the four ribonucleoside triphosphates as substrates. The polypeptide is DNA-directed RNA polymerase subunit beta (Bordetella parapertussis (strain 12822 / ATCC BAA-587 / NCTC 13253)).